Here is a 521-residue protein sequence, read N- to C-terminus: Signal recognition particle protein (521 aa).

Residues 107–114, 196–200, and 254–257 each bind GTP; these read GLQGSGKT, DTAGR, and TKLD. The interval 436–505 is disordered; the sequence is GGMGIPGMGR…MPDGLNELPP (70 aa). Over residues 447-462 the composition is skewed to basic residues; it reads SATRKSKGGKGKKRAR.

This sequence belongs to the GTP-binding SRP family. SRP54 subfamily. In terms of assembly, part of the signal recognition particle protein translocation system, which is composed of SRP and FtsY.

Its subcellular location is the cytoplasm. The catalysed reaction is GTP + H2O = GDP + phosphate + H(+). Involved in targeting and insertion of nascent membrane proteins into the cytoplasmic membrane. Binds to the hydrophobic signal sequence of the ribosome-nascent chain (RNC) as it emerges from the ribosomes. The SRP-RNC complex is then targeted to the cytoplasmic membrane where it interacts with the SRP receptor FtsY. This is Signal recognition particle protein from Mycobacterium leprae (strain TN).